The primary structure comprises 1138 residues: MSLQSAQYLRQAEVLKAEMTDSKLGPAEVWTSRQALQDLYQKMLVTDLEYALDKKVEQDLWNHAFKNQITTLQGQAKNRANPNRSEVQANLSLFLEAASGFYTQLLQELCTVFNVDLPCRVKSSQLGIISNKQTHSSTIVKPQSSSCSYICQHCLVHLGDIARYRNQTSQAESYYRHAAQLVPSNGQPYNQLAILASSKGDHLTTIFYYCRSIAVKFPFPAASTNLQKALSKALESRDELKTKWGVSDFIKAFIKFHGHVYLSKSLEKLSPLREKLEEQFKRLLFQKAFNSQQLVHVTVINLFQLHHLRDFSNETEQHSYSQDEQLCWTQLLALFMSFLGILCKCPLQNDSQESNNAYPLPAVKVSMDWLRLRPRVFQEAVVDERQYIWPWLISLLNSFHPREDDLSNTNATPLPEEFELQGFLALRPSFRNLDFSKGHQGITGDKEGQQRRIRQQRLISIGKWIADNQPRLIQCENEVGKLLFITEIPELILEDPSEAKENLILQETSVVESLATDGSPGLKSVLSTGRNPSNSCDSGEKPVVTFKENIKPREVNQGRSFPPKEVKSQTELRKTPVSEARKTPVTQTPSQTSNSQFIPIHHPGAFPPLPSRPGFPPPTYVIPPPVAFSMGSGYTFPAGVSVPGTFLQSTAHSPAGNQVQAGKQSHIPYSQQRPSGPGPMNQGPQQSQPPSQPPLTSLPAQPTAQSTSQLQVQALAQQQQSPTKVIPALGKSPPHHSGFQQYQQADASKQLWNPPQVQSPLGKIMPVKQSYYLQTQDPIKLFEPSLQPPVIQQQPLEKKMKPFPMEPYNHNPSEVKVPEFYWDSSYSMADNRAVMAQQPNMDRRSKRSPGVFRPEQDPVPRMPFEDPKSSPLLPPDLLKSLAALEEEEELIFSNPPDLYPALLGPLASLPGRSLFKSLLEKPSELMSHSSSFLSLTGFSVNQERYPNSSMFNEVYGKNLTTSSKAELNPSVASQETSLYSLFEGTPWSPSLPASSDHSTPASQSPHSSNPSSLPSSPPTHNHNSAPFSNFGPIGTPDNRDRRPADRWKTDKPAMGGFGVDYLSATSSSESSWHQASTPSGTWTGHGPSMEDSSAVLMESLKSIWSSSMMHPGPSALEQLLMQQKQKQQRGQGAMNPPH.

N-acetylserine is present on Ser2. TPR repeat units follow at residues 152–185 (QHCL…VPSN) and 187–219 (QPYN…KFPF). 5 disordered regions span residues 515-612 (ATDG…LPSR), 649-745 (STAH…YQQA), 838-871 (QPNM…KSSP), 990-1090 (SLPA…PSME), and 1106-1138 (SSMM…NPPH). Ser519 bears the Phosphoserine mark. The span at 525-537 (VLSTGRNPSNSCD) shows a compositional bias: polar residues. Basic and acidic residues predominate over residues 548–582 (ENIKPREVNQGRSFPPKEVKSQTELRKTPVSEARK). Thr575 carries the post-translational modification Phosphothreonine. Composition is skewed to polar residues over residues 584-597 (PVTQ…NSQF) and 649-673 (STAH…SQQR). Residues 674–721 (PSGPGPMNQGPQQSQPPSQPPLTSLPAQPTAQSTSQLQVQALAQQQQS) show a composition bias toward low complexity. Ser732 and Ser848 each carry phosphoserine. The segment covering 854–868 (PEQDPVPRMPFEDPK) has biased composition (basic and acidic residues). Residues 990–999 (SLPASSDHST) are compositionally biased toward polar residues. Positions 1000–1026 (PASQSPHSSNPSSLPSSPPTHNHNSAP) are enriched in low complexity. The segment covering 1037 to 1051 (DNRDRRPADRWKTDK) has biased composition (basic and acidic residues). A compositionally biased stretch (polar residues) spans 1063 to 1082 (SATSSSESSWHQASTPSGTW). Residues 1118 to 1132 (QLLMQQKQKQQRGQG) are compositionally biased toward low complexity.

In terms of assembly, part of a complex that contains SMG5, SMG7, PPP2CA, a short isoform of UPF3A (isoform UPF3AS, but not isoform UPF3AL) and phosphorylated UPF1. Interacts with DHX34; the interaction is RNA-independent.

It localises to the cytoplasm. The protein localises to the nucleus. In terms of biological role, plays a role in nonsense-mediated mRNA decay. Recruits UPF1 to cytoplasmic mRNA decay bodies. Together with SMG5 is thought to provide a link to the mRNA degradation machinery involving exonucleolytic pathways, and to serve as an adapter for UPF1 to protein phosphatase 2A (PP2A), thereby triggering UPF1 dephosphorylation. This chain is Nonsense-mediated mRNA decay factor SMG7, found in Mus musculus (Mouse).